A 390-amino-acid polypeptide reads, in one-letter code: Two-component response regulator ORR29 (390 aa).

Residues 13 to 130 enclose the Response regulatory domain; that stretch reads SAMVIDEDKC…TIKNLWQYVD (118 aa). D65 carries the post-translational modification 4-aspartylphosphate. Positions 169-226 form a DNA-binding region, myb-like GARP; sequence KKYYLMWTPHLQKKFLHALQILGKDASPKNIKKIMGVDNIDCRQIAAHLQKHRLRLTK. Disordered stretches follow at residues 233–271 and 303–339; these read FTTDTSKDESNSRIGPAESHHVCRNASTLQPRSNTQPTE and SKHSSDPSGDEDEQVVVGGDQDGCANEANDIDSSGDH. Residues 257-271 are compositionally biased toward polar residues; the sequence is NASTLQPRSNTQPTE.

Belongs to the ARR family. Type-B subfamily. Post-translationally, two-component system major event consists of a His-to-Asp phosphorelay between a sensor histidine kinase (HK) and a response regulator (RR). In plants, the His-to-Asp phosphorelay involves an additional intermediate named Histidine-containing phosphotransfer protein (HPt). This multistep phosphorelay consists of a His-Asp-His-Asp sequential transfer of a phosphate group between first a His and an Asp of the HK protein, followed by the transfer to a conserved His of the HPt protein and finally the transfer to an Asp in the receiver domain of the RR protein.

It localises to the nucleus. Its function is as follows. Transcriptional activator that binds specific DNA sequence. Functions as a response regulator involved in His-to-Asp phosphorelay signal transduction system. Phosphorylation of the Asp residue in the receiver domain activates the ability of the protein to promote the transcription of target genes. May directly activate some type-A response regulators in response to cytokinins. In Oryza sativa subsp. indica (Rice), this protein is Two-component response regulator ORR29.